Reading from the N-terminus, the 386-residue chain is Alanine racemase 1 (386 aa).

The active-site Proton acceptor; specific for D-alanine is K38. K38 is subject to N6-(pyridoxal phosphate)lysine. R136 contacts substrate. Y267 acts as the Proton acceptor; specific for L-alanine in catalysis. M315 is a binding site for substrate.

This sequence belongs to the alanine racemase family. It depends on pyridoxal 5'-phosphate as a cofactor.

It catalyses the reaction L-alanine = D-alanine. The protein operates within amino-acid biosynthesis; D-alanine biosynthesis; D-alanine from L-alanine: step 1/1. Catalyzes the interconversion of L-alanine and D-alanine. May also act on other amino acids. This is Alanine racemase 1 (alr1) from Clostridium acetobutylicum (strain ATCC 824 / DSM 792 / JCM 1419 / IAM 19013 / LMG 5710 / NBRC 13948 / NRRL B-527 / VKM B-1787 / 2291 / W).